The following is a 352-amino-acid chain: Homeobox protein Mohawk (352 aa).

The interval 19 to 54 is disordered; it reads GASERERGGRPYSGVLDSPHARPEVGIPDGPPLKDN. Positions 71 to 132 form a DNA-binding region, homeobox; TALE-type; that stretch reads VRHKRQALQD…NARRRLKNTV (62 aa). Disordered regions lie at residues 159–189 and 245–301; these read VSSD…VHHP and TRQR…PSKD.

Belongs to the TALE/IRO homeobox family.

The protein localises to the nucleus. May act as a morphogenetic regulator of cell adhesion. This is Homeobox protein Mohawk (MKX) from Homo sapiens (Human).